A 449-amino-acid polypeptide reads, in one-letter code: Probable pectate lyase P59 (449 aa).

An N-terminal signal peptide occupies residues 1-22 (MGGPKIKYSFLFLCITFATIIP). N-linked (GlcNAc...) asparagine glycosylation is found at Asn56, Asn80, and Asn81. Ca(2+)-binding residues include Asp245, Asp269, and Asp273. The active site involves Arg325.

The protein belongs to the polysaccharide lyase 1 family. Requires Ca(2+) as cofactor. As to expression, expressed in anthers and pollen.

The enzyme catalyses Eliminative cleavage of (1-&gt;4)-alpha-D-galacturonan to give oligosaccharides with 4-deoxy-alpha-D-galact-4-enuronosyl groups at their non-reducing ends.. Its pathway is glycan metabolism; pectin degradation; 2-dehydro-3-deoxy-D-gluconate from pectin: step 2/5. Functionally, might be needed during pollen development and tube growth. This chain is Probable pectate lyase P59 (LAT59), found in Solanum lycopersicum (Tomato).